The following is a 550-amino-acid chain: MFCVQCEQTIRTPAGNGCSYAQGMCGKTAETSDLQDLLIATLQGLSAWAVKAREYGIINHDVDSFAPRAFFSTLTNVNFDSPRIVGYAREAIALREALKAQCLAVDANARVDNPMADLQLMSDDLGELQRQAAEFTPNKDKAAIGENILGLRLLCLYGLKGAAAYMEHAHVLGQYDNDIYAQYHKIMAWLGTWPADMNALLECSMEIGQMNFKVMSILDAGETGKYGHPTPTQVNVKATAGKCILISGHDLKDLYNLLEQTEGTGVNVYTHGEMLPAHGYPELRKFKHLVGNYGSGWQNQQVEFARFPGPIVMTSNCIIDPTVGAYDDRIWTRSIVGWPGVRHLDGEDFSAVIAQAQQMAGFPYSEIPHLITVGFGRQTLLGAADTLIDLVSREKLRHIFLLGGCDGARGERHYFTDFATSVPDDCLILTLACGKYRFNKLEFGDIEGLPRLVDAGQCNDAYSAIILAVTLAEKLGCGVNDLPLSLVLSWFEQKAIVILLTLLSLGVKNIVTGPTAPGFLTPDLLAVLNEKFGLRSITTVEEDMKQLLSA.

Residues cysteine 3, cysteine 6, cysteine 18, and cysteine 25 each contribute to the [2Fe-2S] cluster site. Histidine 249, glutamate 273, cysteine 317, cysteine 405, cysteine 433, cysteine 458, glutamate 492, and lysine 494 together coordinate hybrid [4Fe-2O-2S] cluster. Cysteine 405 carries the cysteine persulfide modification.

It belongs to the HCP family. It depends on [2Fe-2S] cluster as a cofactor. Hybrid [4Fe-2O-2S] cluster serves as cofactor.

The protein localises to the cytoplasm. It carries out the reaction A + NH4(+) + H2O = hydroxylamine + AH2 + H(+). Its function is as follows. Catalyzes the reduction of hydroxylamine to form NH(3) and H(2)O. This is Hydroxylamine reductase from Escherichia coli O6:K15:H31 (strain 536 / UPEC).